The primary structure comprises 296 residues: Pantothenate synthetase (296 aa).

Met30 to His37 contacts ATP. Residue His37 is the Proton donor of the active site. A (R)-pantoate-binding site is contributed by Gln61. Gln61 provides a ligand contact to beta-alanine. Gly149–Asp152 contacts ATP. Gln155 is a binding site for (R)-pantoate. ATP-binding positions include Val178 and Met186–Arg189.

This sequence belongs to the pantothenate synthetase family. Homodimer.

The protein localises to the cytoplasm. The catalysed reaction is (R)-pantoate + beta-alanine + ATP = (R)-pantothenate + AMP + diphosphate + H(+). It participates in cofactor biosynthesis; (R)-pantothenate biosynthesis; (R)-pantothenate from (R)-pantoate and beta-alanine: step 1/1. Catalyzes the condensation of pantoate with beta-alanine in an ATP-dependent reaction via a pantoyl-adenylate intermediate. This is Pantothenate synthetase from Vibrio atlanticus (strain LGP32) (Vibrio splendidus (strain Mel32)).